A 531-amino-acid polypeptide reads, in one-letter code: T-complex protein 1 subunit zeta (531 aa).

An N-acetylalanine modification is found at alanine 2. The residue at position 5 (lysine 5) is an N6-acetyllysine. Residue glycine 39 participates in ADP binding. Residue glycine 39 coordinates ATP. Residue aspartate 90 coordinates Mg(2+). ADP contacts are provided by glycine 91, threonine 92, threonine 93, serine 94, threonine 158, and lysine 159. Positions 91, 92, and 93 each coordinate ATP. Position 199 is an N6-acetyllysine (lysine 199). Serine 205 carries the phosphoserine modification. Lysine 251 participates in a covalent cross-link: Glycyl lysine isopeptide (Lys-Gly) (interchain with G-Cter in SUMO2). N6-acetyllysine is present on residues lysine 287, lysine 365, lysine 377, and lysine 388. Alanine 411 lines the ADP pocket. Residues alanine 411, glycine 412, aspartate 496, and lysine 501 each contribute to the ATP site. Aspartate 496 provides a ligand contact to ADP.

The protein belongs to the TCP-1 chaperonin family. Component of the chaperonin-containing T-complex (TRiC), a hexadecamer composed of two identical back-to-back stacked rings enclosing a protein folding chamber. Each ring is made up of eight different subunits: TCP1/CCT1, CCT2, CCT3, CCT4, CCT5, CCT6A/CCT6, CCT7, CCT8. Interacts with PACRG.

It is found in the cytoplasm. It carries out the reaction ATP + H2O = ADP + phosphate + H(+). Functionally, component of the chaperonin-containing T-complex (TRiC), a molecular chaperone complex that assists the folding of actin, tubulin and other proteins upon ATP hydrolysis. The TRiC complex mediates the folding of WRAP53/TCAB1, thereby regulating telomere maintenance. This chain is T-complex protein 1 subunit zeta (CCT6), found in Oryctolagus cuniculus (Rabbit).